The following is a 436-amino-acid chain: Prenyltransferase nscD (436 aa).

It belongs to the tryptophan dimethylallyltransferase family.

It participates in secondary metabolite biosynthesis. Its function is as follows. Prenyltransferase; part of the gene cluster that mediates the biosynthesis of neosartoricin B, a prenylated anthracenone that probably exhibits T-cell antiproliferative activity, suggestive of a physiological role as an immunosuppressive agent. The non-reducing polyketide synthase nscA probably synthesizes and cyclizes the decaketide backbone. The hydrolase nscB then mediates the product release through hydrolysis followed by spontaneous decarboxylation. The prenyltransferase nscD catalyzes the addition of the dimethylallyl group to the aromatic C5. The FAD-dependent monooxygenase nscC is then responsible for the stereospecific hydroxylation at C2. Neosartoricin B can be converted into two additional compounds neosartoricins C and D. Neosartoricin C is a spirocyclic compound that is cyclized through the attack of C3 hydroxyl on C14, followed by dehydration. On the other hand, neosartoricin D is a further cyclized compound in which attack of C2 on C14 in neosartoricin C results in the formation of the acetal-containing dioxabicyclo-octanone ring. Both of these compounds are novel and possibly represent related metabolites of the gene cluster. This Trichophyton equinum (strain ATCC MYA-4606 / CBS 127.97) (Horse ringworm fungus) protein is Prenyltransferase nscD.